Reading from the N-terminus, the 285-residue chain is Ribosomal RNA small subunit methyltransferase A (285 aa).

Residues Asn30, Leu32, Gly57, Glu78, Asp101, and Asn121 each coordinate S-adenosyl-L-methionine.

Belongs to the class I-like SAM-binding methyltransferase superfamily. rRNA adenine N(6)-methyltransferase family. RsmA subfamily.

The protein localises to the cytoplasm. It carries out the reaction adenosine(1518)/adenosine(1519) in 16S rRNA + 4 S-adenosyl-L-methionine = N(6)-dimethyladenosine(1518)/N(6)-dimethyladenosine(1519) in 16S rRNA + 4 S-adenosyl-L-homocysteine + 4 H(+). Its function is as follows. Specifically dimethylates two adjacent adenosines (A1518 and A1519) in the loop of a conserved hairpin near the 3'-end of 16S rRNA in the 30S particle. May play a critical role in biogenesis of 30S subunits. The sequence is that of Ribosomal RNA small subunit methyltransferase A from Treponema pallidum (strain Nichols).